A 340-amino-acid chain; its full sequence is Ferrochelatase (340 aa).

Positions 189 and 292 each coordinate Fe cation.

The protein belongs to the ferrochelatase family.

Its subcellular location is the cytoplasm. The catalysed reaction is heme b + 2 H(+) = protoporphyrin IX + Fe(2+). The protein operates within porphyrin-containing compound metabolism; protoheme biosynthesis; protoheme from protoporphyrin-IX: step 1/1. In terms of biological role, catalyzes the ferrous insertion into protoporphyrin IX. This is Ferrochelatase from Pseudomonas syringae pv. tomato (strain ATCC BAA-871 / DC3000).